The following is a 306-amino-acid chain: Bifunctional protein FolD 1 (306 aa).

NADP(+) is bound by residues 168 to 170 (GRS), serine 193, and isoleucine 234.

This sequence belongs to the tetrahydrofolate dehydrogenase/cyclohydrolase family. Homodimer.

It catalyses the reaction (6R)-5,10-methylene-5,6,7,8-tetrahydrofolate + NADP(+) = (6R)-5,10-methenyltetrahydrofolate + NADPH. The catalysed reaction is (6R)-5,10-methenyltetrahydrofolate + H2O = (6R)-10-formyltetrahydrofolate + H(+). Its pathway is one-carbon metabolism; tetrahydrofolate interconversion. Its function is as follows. Catalyzes the oxidation of 5,10-methylenetetrahydrofolate to 5,10-methenyltetrahydrofolate and then the hydrolysis of 5,10-methenyltetrahydrofolate to 10-formyltetrahydrofolate. This Rhizobium meliloti (strain 1021) (Ensifer meliloti) protein is Bifunctional protein FolD 1.